A 301-amino-acid polypeptide reads, in one-letter code: tRNA pseudouridine synthase B (301 aa).

D47 acts as the Nucleophile in catalysis.

The protein belongs to the pseudouridine synthase TruB family. Type 1 subfamily.

It carries out the reaction uridine(55) in tRNA = pseudouridine(55) in tRNA. Responsible for synthesis of pseudouridine from uracil-55 in the psi GC loop of transfer RNAs. The protein is tRNA pseudouridine synthase B of Cereibacter sphaeroides (strain ATCC 17025 / ATH 2.4.3) (Rhodobacter sphaeroides).